Reading from the N-terminus, the 3097-residue chain is Neural-cadherin (3097 aa).

The signal sequence occupies residues 1–36; the sequence is MAARRCLNQLRQRYITNRFNICTCAIFLISLPFILA. N97 and N150 each carry an N-linked (GlcNAc...) asparagine glycan. Residues 181–305 enclose the Cadherin 1 domain; it reads VRENQPAGTR…LDENDNRPIF (125 aa). Residues N325 and N426 are each glycosylated (N-linked (GlcNAc...) asparagine). 15 Cadherin domains span residues 430-543, 554-651, 660-756, 766-858, 867-968, 978-1078, 1087-1183, 1193-1299, 1307-1414, 1423-1514, 1523-1630, 1639-1742, 1749-1861, 1870-1966, and 1974-2085; these read HREK…PPYF, VQLN…APQF, IPEN…APKF, VDED…EPKF, VDEN…KPVF, VEEG…PPLF, VKQD…PPVW, VKEN…IPLF, VLEG…PPYF, VDEN…PPVF, ITEE…APIF, VTEN…PPQF, TEVD…KPHF, VFED…APKF, and LPEH…QPGS. N-linked (GlcNAc...) asparagine glycosylation is present at N930. A glycan (N-linked (GlcNAc...) asparagine) is linked at N1266. Cystine bridges form between C2346-C2357, C2351-C2366, C2368-C2377, C2559-C2585, C2592-C2607, C2601-C2616, C2618-C2627, C2787-C2822, C2869-C2880, C2874-C2891, and C2893-C2902. In terms of domain architecture, EGF-like 1 spans 2346 to 2377; it reads CRTTPCHNGGRCVDTRFGPHCSCPVGYTGPRC. One can recognise a Laminin G-like 1 domain in the interval 2379 to 2585; it reads QTTRSFRGNG…GLSRNSVAGC (207 aa). An EGF-like 2 domain is found at 2592 to 2627; it reads CAQTETTARCWEHGNCVGSLSEARCHCRPGWTGPAC. Positions 2631 to 2822 constitute a Laminin G-like 2 domain; sequence TIPTTFKAQS…TMARNLEKGC (192 aa). Positions 2869–2902 constitute an EGF-like 3 domain; sequence CLDMPCMNGATCINLEPRLRYRCICPDGFWGENC. A helical membrane pass occupies residues 2917–2937; the sequence is ALAAILVCLLIILILVLVFVV. Over 2938–3097 the chain is Cytoplasmic; sequence YNRRREAHIK…PNPHNTELEL (160 aa).

In terms of tissue distribution, in the embryo, the protein first appears in the mesoderm at stage 9 and is present in the myoblasts and muscle fibers by stage 12 and stage 14, respectively. At stage 12 the protein is also located in the axons of the entire CNS, but not in the glial cells. In third instar larvae protein is expressed in the CNS neuropile, photoreceptor axons and precursors of adult muscles.

It localises to the cell membrane. Cadherins are calcium-dependent cell adhesion proteins. They preferentially interact with themselves in a homophilic manner in connecting cells; cadherins may thus contribute to the sorting of heterogeneous cell types. May associate with arm neural isoform and participate in the transmission of developmental information. The sequence is that of Neural-cadherin (CadN) from Drosophila melanogaster (Fruit fly).